A 639-amino-acid polypeptide reads, in one-letter code: MSDKKDQVPGAVEAPRGVSRRSFLGTGAVTGAVLAGATALGAGTFTRESWAAAAKEAKSKIHVGPGELDEYYGFWSGGHQGEVRVLGVPSMRELMRIPVFNVDSATGWGLTNESKRILGDSAKYQNGDCHHPHISMTDGKYDGKYLFINDKANSRVARIRLDIMKCDKILTVPNVQAIHGLRLQKVPYTKYVFANAEFVIPHPNDGHTFDLQDKNSFTMFNAIDAEKMEMAFQVIVDGNLDNSDADYTGKYAASTCYNSEKAYDLGGMMRNERDWVVVFNILRIEAAIKAGKFITLDGSKVPVVDGRKTDGKDSEFTRYIPVPKNPHGLNTSSDGKYFIANGKLSPTVSMIAIDRLDDLFNDRYKDPREVIVAEPELGLGPLHTTFDGRGNAYTTLFIDSQVVKWNMDEAIRAYKGEKVNYIKQKLDVQYQPGHNHASLTETSEADGKWLVVLCKFSKDRFLPTGPLHPENDQLIDISGEEMKLVHDGPAFAEPHDCILARRDQIKTQKIWNRNDPFFADTVALAKKDGINLETDNKVIRDGNKVRVYMTSMAPAYGLTEFTVKQGNEVTVTITNIDQIEDVSHGFVMTNHGASMEISPQQTSSITFTADKAGLHWYYCSWFCHALHMEMVGRMLVEKA.

The tat-type signal signal peptide spans 1-54 (MSDKKDQVPGAVEAPRGVSRRSFLGTGAVTGAVLAGATALGAGTFTRESWAAAA). Residues His-130, His-131, and His-179 each coordinate Cu cation. Residues Tyr-257, Glu-260, Met-268, Asp-274, and Asn-325 each coordinate Ca(2+). 3 residues coordinate Cu cation: His-327, His-383, and His-434. Residues Lys-455 and Glu-470 each contribute to the Ca(2+) site. Positions 495, 584, 619, 621, 623, 627, and 630 each coordinate Cu cation. The COX2-like stretch occupies residues 543-639 (NKVRVYMTSM…MVGRMLVEKA (97 aa)).

This sequence belongs to the NosZ family. The protein in the C-terminal section; belongs to the cytochrome c oxidase subunit 2 family. Homodimer. The cofactor is Ca(2+). Cu cation serves as cofactor. Predicted to be exported by the Tat system. The position of the signal peptide cleavage has not been experimentally proven.

The protein localises to the periplasm. The catalysed reaction is N2 + 2 Fe(III)-[cytochrome c] + H2O = nitrous oxide + 2 Fe(II)-[cytochrome c] + 2 H(+). Its pathway is nitrogen metabolism; nitrate reduction (denitrification); dinitrogen from nitrate: step 4/4. Its function is as follows. Nitrous-oxide reductase is part of a bacterial respiratory system which is activated under anaerobic conditions in the presence of nitrate or nitrous oxide. The chain is Nitrous-oxide reductase (nosZ) from Pseudomonas fluorescens.